Here is a 4076-residue protein sequence, read N- to C-terminus: E3 ubiquitin-protein ligase TOM1-like (4076 aa).

Residues 225 to 237 are compositionally biased toward low complexity; that stretch reads SSAAPAVSAGSTA. Disordered stretches follow at residues 225–256, 288–360, 748–819, 921–970, 1083–1103, 1571–1646, 1988–2041, 2067–2110, 2275–2295, 2356–2551, 2581–2634, 2782–2817, 2858–2955, 3037–3066, 3105–3132, 3216–3241, and 3353–3444; these read SSAA…KNVA, YPDT…RDGP, IPAE…ILPS, LEAP…NKPA, SPVQ…SSGT, MALD…ITRE, PADA…KRPI, NVPA…KLAK, EGDK…IGRS, SGTA…ELDY, GDDL…LLAP, IPIP…ESTH, EKAR…QAED, EQHE…ASIL, RQLH…GAGT, KQLK…NNNG, and EEQA…QLTP. Basic and acidic residues predominate over residues 238 to 250; the sequence is KAKDKEKEKEKAT. Positions 311–320 are enriched in low complexity; sequence TTSSPAAPTP. The span at 322-343 shows a compositional bias: polar residues; it reads RRSSTMNVSQSSRTQRVGSSEE. A compositionally biased stretch (acidic residues) spans 767–778; the sequence is EGNDADDDSEDD. Positions 940–950 are enriched in basic and acidic residues; it reads VKGKGKEKATD. The span at 959–969 shows a compositional bias: polar residues; the sequence is ASSSSSGNNKP. Positions 1606–1620 are enriched in polar residues; the sequence is PGTSRETNVGASTTA. The span at 1621–1632 shows a compositional bias: low complexity; that stretch reads PQQLPVLPSQQP. The segment covering 1633 to 1642 has biased composition (polar residues); the sequence is ATESQSNTPR. Residues 2021-2041 are compositionally biased toward basic and acidic residues; that stretch reads VTDKDMHDAPKNPAQDLKRPI. Polar residues predominate over residues 2086–2096; that stretch reads NEATPSPSGDE. Over residues 2099-2110 the composition is skewed to basic and acidic residues; sequence SESKEKEKKLAK. Composition is skewed to acidic residues over residues 2378-2387 and 2405-2450; these read DLTDDREETP and EFSD…DLGE. A compositionally biased stretch (low complexity) spans 2460-2469; it reads QPGVVEVLMG. Composition is skewed to acidic residues over residues 2470-2516 and 2523-2551; these read ENDD…DLED and EEGN…ELDY. Over residues 2587–2597 the composition is skewed to basic and acidic residues; that stretch reads EPIRDFDGHYI. Positions 2598-2622 are enriched in acidic residues; sequence DDDEDGEEDDDEDEGEDDMDDDMYF. 2 stretches are compositionally biased toward basic and acidic residues: residues 2788-2803 and 2858-2912; these read HSRE…DTYQ and EKAR…ERAE. The stretch at 2851-2929 forms a coiled coil; sequence AIQAEKEEKA…QAAADQEANA (79 aa). Residues 2913–2927 show a composition bias toward low complexity; the sequence is AAAQAAAQAAADQEA. Residues 3037-3047 show a composition bias toward basic and acidic residues; that stretch reads EQHEQRRRERQ. Positions 3108–3117 are enriched in polar residues; that stretch reads HAQQGGQAAS. Residues 3341–3375 adopt a coiled-coil conformation; the sequence is PLQAIERRRKEAEEQAKKKKEAEEKAATEREAANA. Basic and acidic residues predominate over residues 3353–3372; that stretch reads EEQAKKKKEAEEKAATEREA. Residues 3373–3414 show a composition bias toward low complexity; that stretch reads ANAPEEQASTSTEQTPAQQEATQQPSESTPAAASGQQPAQQD. The segment covering 3415 to 3439 has biased composition (basic and acidic residues); it reads QENKELEAPKEKADEKDVQSDEKKI. Residues 3740–4076 enclose the HECT domain; sequence KADELKFGKL…TAGSDYFGFA (337 aa). The Glycyl thioester intermediate role is filled by Cys4043.

Belongs to the UPL family. TOM1/PTR1 subfamily.

Its subcellular location is the nucleus. It catalyses the reaction S-ubiquitinyl-[E2 ubiquitin-conjugating enzyme]-L-cysteine + [acceptor protein]-L-lysine = [E2 ubiquitin-conjugating enzyme]-L-cysteine + N(6)-ubiquitinyl-[acceptor protein]-L-lysine.. It functions in the pathway protein modification; protein ubiquitination. Probable ubiquitin ligase protein, which may be involved in mRNA export. E3 ubiquitin ligase proteins mediate ubiquitination and subsequent proteasomal degradation of target proteins. Participates in mRNA export from the nucleus by regulating the transport of hnRNP proteins. This is E3 ubiquitin-protein ligase TOM1-like from Neurospora crassa (strain ATCC 24698 / 74-OR23-1A / CBS 708.71 / DSM 1257 / FGSC 987).